A 207-amino-acid polypeptide reads, in one-letter code: Ion-translocating oxidoreductase complex subunit G (207 aa).

A helical transmembrane segment spans residues 11-31 (GILLGFIALLCTIISTGIFFL). The residue at position 175 (threonine 175) is an FMN phosphoryl threonine.

It belongs to the RnfG family. In terms of assembly, the complex is composed of six subunits: RnfA, RnfB, RnfC, RnfD, RnfE and RnfG. Requires FMN as cofactor.

The protein localises to the cell inner membrane. Functionally, part of a membrane-bound complex that couples electron transfer with translocation of ions across the membrane. This Haemophilus influenzae (strain 86-028NP) protein is Ion-translocating oxidoreductase complex subunit G.